The sequence spans 651 residues: Threonine--tRNA ligase (651 aa).

The region spanning 1–61 is the TGS domain; it reads MPTIQLPDGS…DKDVSLRIIT (61 aa). Residues 242–533 are catalytic; it reads DHRLLAKKMD…LLEESAGKLP (292 aa). 3 residues coordinate Zn(2+): C333, H384, and H510. The disordered stretch occupies residues 631-651; the sequence is ISQRSRKSPAPSPLFPVGGES.

This sequence belongs to the class-II aminoacyl-tRNA synthetase family. As to quaternary structure, homodimer. Zn(2+) is required as a cofactor.

The protein resides in the cytoplasm. The catalysed reaction is tRNA(Thr) + L-threonine + ATP = L-threonyl-tRNA(Thr) + AMP + diphosphate + H(+). Its function is as follows. Catalyzes the attachment of threonine to tRNA(Thr) in a two-step reaction: L-threonine is first activated by ATP to form Thr-AMP and then transferred to the acceptor end of tRNA(Thr). Also edits incorrectly charged L-seryl-tRNA(Thr). The chain is Threonine--tRNA ligase from Coxiella burnetii (strain RSA 493 / Nine Mile phase I).